The sequence spans 858 residues: Leucine--tRNA ligase (858 aa).

A 'HIGH' region motif is present at residues 42-52 (PYPSGRLHMGH). The 'KMSKS' region signature appears at 618 to 622 (KMSKS). Lys621 is a binding site for ATP.

This sequence belongs to the class-I aminoacyl-tRNA synthetase family.

It is found in the cytoplasm. It carries out the reaction tRNA(Leu) + L-leucine + ATP = L-leucyl-tRNA(Leu) + AMP + diphosphate. This is Leucine--tRNA ligase from Aliivibrio fischeri (strain MJ11) (Vibrio fischeri).